The sequence spans 260 residues: Cytosolic Fe-S cluster assembly factor Nubp2 homolog 1 (260 aa).

G14–S21 contacts ATP. [4Fe-4S] cluster contacts are provided by C188 and C191.

The protein belongs to the Mrp/NBP35 ATP-binding proteins family. NUBP2/CFD1 subfamily. In terms of assembly, heterotetramer of 2 Nubp1 and 2 Nubp2 chains. [4Fe-4S] cluster serves as cofactor.

It is found in the cytoplasm. Its function is as follows. Component of the cytosolic iron-sulfur (Fe/S) protein assembly (CIA) machinery. Required for maturation of extramitochondrial Fe-S proteins. The Nubp1-Nubp2 heterotetramer forms a Fe-S scaffold complex, mediating the de novo assembly of an Fe-S cluster and its transfer to target apoproteins. The chain is Cytosolic Fe-S cluster assembly factor Nubp2 homolog 1 from Drosophila yakuba (Fruit fly).